Reading from the N-terminus, the 393-residue chain is Pre-mRNA splicing factor SR-like 1 (393 aa).

A disordered region spans residues Met173–Arg393. Positions Gln249 to Arg312 are enriched in basic and acidic residues. The Nuclear localization signal signature appears at Ser301–Asp308. A compositionally biased stretch (basic residues) spans His313–Ser325. 2 stretches are compositionally biased toward basic and acidic residues: residues Gln329 to Ser346 and Lys356 to Ile385.

Belongs to the PRP38 family. Post-translationally, phosphorylated. Mostly expressed in siliques and leaves, also present in seedlings, flowers and stems, and, at low levels, in roots.

Its subcellular location is the nucleus. In terms of biological role, may be required for pre-mRNA splicing. Confers salt tolerance to LiCl and NaCl. This is Pre-mRNA splicing factor SR-like 1 from Arabidopsis thaliana (Mouse-ear cress).